The sequence spans 494 residues: DnaJ homolog subfamily C member 7 (494 aa).

An N-acetylalanine modification is found at alanine 2. TPR repeat units lie at residues 28 to 61, 62 to 95, 96 to 129, 142 to 175, 210 to 243, 256 to 289, 294 to 327, and 328 to 361; these read AESF…CPNN, ASYY…DDSF, VRGH…DHKN, VMEY…APAC, ADAL…APDH, LKAK…DPNN, AKLY…DDTY, and IKAY…EKTK. A J domain is found at 381–451; the sequence is DYYKILGVDK…KKKTRYDSGQ (71 aa). A Phosphoserine modification is found at serine 393.

Associates with complexes containing chaperones HSP70 and HSP90. Interacts with the GAP domain of NF1. Interacts with HSP90AA1. Interacts with HSPA1A/B; the interaction is enhanced by ATP. Interacts with HSP90AB1. Interacts with PGR. Interacts with RAD9A; the interaction is interrupted by UV and heat shock treatments. Interacts with HUS1 and RAD1. Interacts with NR1I3; this complex may also include HSP90 Interacts with HSPA8. In terms of tissue distribution, widely expressed with high levels in liver, skeletal muscle, kidney and testis.

It is found in the cytoplasm. It localises to the nucleus. The protein localises to the cytoskeleton. In terms of biological role, acts as a co-chaperone regulating the molecular chaperones HSP70 and HSP90 in folding of steroid receptors, such as the glucocorticoid receptor and the progesterone receptor. Proposed to act as a recycling chaperone by facilitating the return of chaperone substrates to early stages of chaperoning if further folding is required. In vitro, induces ATP-independent dissociation of HSP90 but not of HSP70 from the chaperone-substrate complexes. Recruits NR1I3 to the cytoplasm. This is DnaJ homolog subfamily C member 7 (Dnajc7) from Mus musculus (Mouse).